A 614-amino-acid polypeptide reads, in one-letter code: MRMWLVSAIALVDILCTSKIEELVENMGKKIEEALPHEFDSAEKEALKKHLKETAGLGTRLMVPCIFHEDRVVASPTTRYQDIDEEEKGYVEKVIALLPRLLWRSVAYIYVFGNDSWVVNLMEEVFETAPFKKSDAVALYKRARGRLGIRLIDLVNRTFRHNIGMLNRFGQRLAQEAEAKIQEISSSLSDEEKRKEEKMLQIIKEYGESLCTKEKQEEIIRAQEIMCDACACIWERDSNRESFVMETYSRHLYLRMIGSSMDVEEPLLSYIDHRGLIDAYEKYKSIDIVAELIKQVFTERGCISDESVNDAVCGVREREEAEKMRGEEERRKKEEESLRNTLELLRMEEKEKSKSRGKKKKGGKKGSGEVTAKMEEEKKDSEEVEESAEAEVSLEEMAVGGARSKERSSKKKSRSKGHRYKVHKRVLRWTKSAERIKAELDEGSEEKWRNKSIEEIEEQKKVHDIIEVCVLLRSLDANRFFVSTNRYMKDGTERWKMVGVGIFEEGGEKKVGKVEVGLYRDKGEGSVIYHLMFKAMDTEKAGKGARSSFGKGDDVEGLEEGAGELSDMSGFEYPKGVRSEIVKGGDAFKIVYRNPKDTSEVLRSLTVLQKAEVL.

2 stretches are compositionally biased toward basic and acidic residues: residues 317–338 and 345–354; these read EREE…EESL and LRMEEKEKSK. The interval 317 to 420 is disordered; sequence EREEAEKMRG…KKSRSKGHRY (104 aa). Positions 355–364 are enriched in basic residues; it reads SRGKKKKGGK. Over residues 372–381 the composition is skewed to basic and acidic residues; that stretch reads AKMEEEKKDS. A compositionally biased stretch (acidic residues) spans 382–394; the sequence is EEVEESAEAEVSL. Positions 408–420 are enriched in basic residues; it reads SSKKKSRSKGHRY.

The protein belongs to the UPF0329 family.

The sequence is that of UPF0329 protein ECU03_0090 from Encephalitozoon cuniculi (strain GB-M1) (Microsporidian parasite).